We begin with the raw amino-acid sequence, 782 residues long: Coiled-coil alpha-helical rod protein 1 (782 aa).

Composition is skewed to basic and acidic residues over residues 62–74 (ERDVSSDRQEPGR) and 208–218 (ETRRAGEAKEL). Disordered stretches follow at residues 62-82 (ERDVSSDRQEPGRRGRSWGLE) and 185-218 (AHKEALSSLTSKAEGLEKSLSSLETRRAGEAKEL). Coiled-coil stretches lie at residues 82–314 (EGSQ…ELTR), 344–398 (LMVQ…EVER), and 498–691 (VTDV…QQEG).

The protein resides in the cytoplasm. It is found in the nucleus. In terms of biological role, may be a regulator of keratinocyte proliferation or differentiation. The sequence is that of Coiled-coil alpha-helical rod protein 1 (CCHCR1) from Gorilla gorilla gorilla (Western lowland gorilla).